Reading from the N-terminus, the 495-residue chain is Acyltransferase abl6 (495 aa).

His-171 acts as the Proton acceptor in catalysis.

It belongs to the plant acyltransferase family.

In terms of biological role, acyltransferase; part of the gene cluster that mediates the biosynthesis of abscisic acid (ABA), a phytohormone that acts antagonistically toward salicylic acid (SA), jasmonic acid (JA) and ethylene (ETH) signaling, to impede plant defense responses. The first step of the pathway catalyzes the reaction from farnesyl diphosphate to alpha-ionylideneethane performed by the alpha-ionylideneethane synthase abl3 via a three-step reaction mechanism involving 2 neutral intermediates, beta-farnesene and allofarnesene. The cytochrome P450 monooxygenase abl1 might then be involved in the conversion of alpha-ionylideneethane to alpha-ionylideneacetic acid. Alpha-ionylideneacetic acid is further converted to abscisic acid in 2 steps involving the cytochrome P450 monooxygenase abl2 and the short-chain dehydrogenase/reductase abl4, via the intermediates 1'-deoxy-ABA or 1',4'-trans-diol-ABA, depending on the order of action of these 2 enzymes. Abl2 is responsible for the hydroxylation of carbon atom C-1' and abl4 might be involved in the oxidation of the C-4' carbon atom. The acyltransferase abl6 seems not essential for the biosynthesis of ABA, but it may acetylate ABA as part of the synthesis of another ABA-related molecule. This Leptosphaeria maculans (strain JN3 / isolate v23.1.3 / race Av1-4-5-6-7-8) (Blackleg fungus) protein is Acyltransferase abl6.